Reading from the N-terminus, the 150-residue chain is Large ribosomal subunit protein bL9 (150 aa).

It belongs to the bacterial ribosomal protein bL9 family.

Functionally, binds to the 23S rRNA. In Photorhabdus laumondii subsp. laumondii (strain DSM 15139 / CIP 105565 / TT01) (Photorhabdus luminescens subsp. laumondii), this protein is Large ribosomal subunit protein bL9.